The chain runs to 171 residues: Large ribosomal subunit protein uL10 (171 aa).

It belongs to the universal ribosomal protein uL10 family. Part of the ribosomal stalk of the 50S ribosomal subunit. The N-terminus interacts with L11 and the large rRNA to form the base of the stalk. The C-terminus forms an elongated spine to which L12 dimers bind in a sequential fashion forming a multimeric L10(L12)X complex.

In terms of biological role, forms part of the ribosomal stalk, playing a central role in the interaction of the ribosome with GTP-bound translation factors. This Maricaulis maris (strain MCS10) (Caulobacter maris) protein is Large ribosomal subunit protein uL10.